A 435-amino-acid chain; its full sequence is Glutamine synthetase (435 aa).

The GS beta-grasp domain maps to K12–A94. The 336-residue stretch at P100–V435 folds into the GS catalytic domain. Positions 123, 125, 180, and 187 each coordinate Mg(2+). G232 contacts L-glutamate. H236 contributes to the Mg(2+) binding site. ATP is bound at residue S240. L-glutamate-binding residues include R291 and R315. ATP is bound by residues R315 and R320. E328 serves as a coordination point for Mg(2+). Position 330 (R330) interacts with L-glutamate.

Belongs to the glutamine synthetase family. In terms of assembly, homooctamer. Mg(2+) serves as cofactor.

It carries out the reaction L-glutamate + NH4(+) + ATP = L-glutamine + ADP + phosphate + H(+). Inhibited by methionine sulfoximine, ADP and pyrophosphate, but not by various nitrogen-containing metabolites that inhibit other GS enzymes. In terms of biological role, catalyzes the ATP-dependent biosynthesis of glutamine from glutamate and ammonia. The sequence is that of Glutamine synthetase from Rhizobium meliloti (strain 1021) (Ensifer meliloti).